Here is a 197-residue protein sequence, read N- to C-terminus: GCN5-related N-acetyltransferase 1, chloroplastic (197 aa).

Residues 1–37 (MFLGGTISTPPASLRLRSTLNPQNAVTQSSSQATFPA) constitute a chloroplast transit peptide. Polar residues predominate over residues 23–34 (QNAVTQSSSQAT). The interval 23-46 (QNAVTQSSSQATFPAAMQRKPPSY) is disordered. The N-acetyltransferase domain occupies 58–195 (FLLRRTTEGL…GMVFIRKQRN (138 aa)). Acetyl-CoA contacts are provided by residues 129 to 131 (VVV), 137 to 142 (SCGLGK), 165 to 167 (EPR), and tyrosine 172. Tyrosine 172 (proton donor) is an active-site residue.

The protein belongs to the acetyltransferase family. GNAT subfamily. As to quaternary structure, oligomer. Post-translationally, autoacetylated. In terms of tissue distribution, expressed in green tissues. Accumulates mainly in flowers and young leaves, and, to a lower extent, in stems and mature leaves, but barely in roots.

The protein resides in the plastid. Its subcellular location is the chloroplast. It carries out the reaction an N-terminal L-alpha-aminoacyl-[protein] + acetyl-CoA = N-terminal N(alpha)-acetyl-L-alpha-aminoacyl-[protein] + CoA + H(+). The enzyme catalyses L-lysyl-[protein] + acetyl-CoA = N(6)-acetyl-L-lysyl-[protein] + CoA + H(+). It catalyses the reaction 5-methoxytryptamine + acetyl-CoA = melatonin + CoA + H(+). The catalysed reaction is serotonin + acetyl-CoA = N-acetylserotonin + CoA + H(+). With respect to regulation, inhibited by 5-methoxytryptamine in vitro. Protein acetyltransferase with dual specificity triggering both N-alpha-acetylation (NTA) and epsilon-lysine acetylation (KA), possibly with a low efficiency or toward specific plastid substrates. Involved in melatonin biosynthesis by catalyzing the formation of N-acetylserotonin (NAS) from serotonin and of melatonin (N-acetyl-5-methoxytryptamine) from 5-methoxytryptamine (5-MT). This is GCN5-related N-acetyltransferase 1, chloroplastic from Arabidopsis thaliana (Mouse-ear cress).